We begin with the raw amino-acid sequence, 685 residues long: Beta-taxilin (685 aa).

The interval 1-135 is disordered; it reads MEINHPDQLS…KEPVSNKEQK (135 aa). Polar residues predominate over residues 18–28; it reads GDSSSLNQNGP. 2 stretches are compositionally biased toward basic and acidic residues: residues 47–67 and 80–90; these read GSLHPEKGAHDVAEELSRQLE and RGKESTSETKE. The segment covering 98–113 has biased composition (acidic residues); the sequence is PDNEDVDYEETTEEID. 2 coiled-coil regions span residues 138-354 and 381-470; these read KKIL…VLKE and NEVF…SEKE. The segment covering 465–478 has biased composition (basic and acidic residues); the sequence is KMSEKEDQVQRTSE. Disordered stretches follow at residues 465–497 and 517–685; these read KMSEKEDQVQRTSEEEPEPSVSENEEVDAEEAN and EFTP…NGVD. A phosphoserine mark is found at Ser-477, Ser-484, and Ser-486. Residues 479–495 show a composition bias toward acidic residues; sequence EEPEPSVSENEEVDAEE. Positions 575 to 591 are enriched in low complexity; the sequence is CEATPAPTASCTPAEAE. Residues 612–627 are compositionally biased toward polar residues; the sequence is ANTSGQAPLSPAQGSL.

It belongs to the taxilin family. As to quaternary structure, binds to the C-terminal coiled coil region of syntaxin family members STX1A, STX3A and STX4A. Has a preference for STX1A. As to expression, specifically expressed in skeletal muscle.

Promotes motor nerve regeneration. May be involved in intracellular vesicle traffic. The sequence is that of Beta-taxilin (Txlnb) from Mus musculus (Mouse).